We begin with the raw amino-acid sequence, 60 residues long: Beta-defensin 8 (60 aa).

Residues 1-22 (MRIHYLLFTFLLVLLSPLAAFS) form the signal peptide. Residues 23–25 (QKI) constitute a propeptide that is removed on maturation. Cystine bridges form between Cys31–Cys58, Cys38–Cys52, and Cys42–Cys59.

It belongs to the beta-defensin family. As to expression, most highly expressed in testis and heart.

The protein localises to the secreted. Functionally, a synthetic peptide displays antimicrobial activities against S.aureus, P.aeruginosa, E.coli and B.cepacia. The antimicrobial activity against S.aureus, E.coli and B.cepacia is reduced in raised concentration of NaCl, but its action against P.aeruginosa is independent of NaCl concentration. The chain is Beta-defensin 8 (Defb8) from Mus musculus (Mouse).